The following is a 245-amino-acid chain: MLRVARIMKCLTSSKAAALDAELMAPSGGFSIDQLMELAGLSVAQAVYKYDKSLAQGKQVLVLVGPGNNGGDGLVAARHLCHLGAKPVIYYPKRTDRPLFNGLVTQLHNLDIKFLDDVNKSTFDSSAHVIDSLFGFSFKPPIREPFPKVIELLKETKTPTTSVDIPSSWDVDRGPEDDNAFQPSSLVSLTAPKGASRHLLPSTRHFLGGRFVSKHIADKYDLEVPAYEGLDHIVELTQNNKEAQI.

One can recognise a YjeF N-terminal domain in the interval 16-224 (AAALDAELMA…HIADKYDLEV (209 aa)). 68 to 72 (NNGGD) is a (6S)-NADPHX binding site. K(+) contacts are provided by asparagine 69 and aspartate 131. Residues 135–141 (GFSFKPP) and aspartate 164 each bind (6S)-NADPHX. Position 167 (serine 167) interacts with K(+).

This sequence belongs to the NnrE/AIBP family. It depends on K(+) as a cofactor.

It localises to the cytoplasm. Its subcellular location is the mitochondrion. The catalysed reaction is (6R)-NADHX = (6S)-NADHX. It carries out the reaction (6R)-NADPHX = (6S)-NADPHX. Functionally, catalyzes the epimerization of the S- and R-forms of NAD(P)HX, a damaged form of NAD(P)H that is a result of enzymatic or heat-dependent hydration. This is a prerequisite for the S-specific NAD(P)H-hydrate dehydratase to allow the repair of both epimers of NAD(P)HX. The chain is NAD(P)H-hydrate epimerase from Yarrowia lipolytica (strain CLIB 122 / E 150) (Yeast).